A 1068-amino-acid chain; its full sequence is Protein AF-10 (1068 aa).

Residues 22 to 74 (IGGCCVCSDERGWAENPLVYCDGHGCSVAVHQACYGIVQVPTGPWFCRKCESQ) form a PHD-type 1 zinc finger. The C2HC pre-PHD-type zinc finger occupies 79–112 (RVRCELCPHKDGALKRTDNGGWAHVVCALYIPEV). The required for interaction with histone H3 stretch occupies residues 106–190 (ALYIPEVQFA…EGNGADNVQY (85 aa)). The PHD-type 2 zinc-finger motif lies at 135-198 (KTCYICDEQG…QYCGYCKYHF (64 aa)). The disordered stretch occupies residues 207–260 (GSNRSYEQSLSDSSSHSQDKHHEKEKKKYKEKDKHKQKHKKQPEPSPALVPSLT). Position 217 is a phosphoserine (serine 217). Residues 223-240 (SQDKHHEKEKKKYKEKDK) are compositionally biased toward basic and acidic residues. Serine 252 carries the phosphoserine modification. Residue lysine 280 forms a Glycyl lysine isopeptide (Lys-Gly) (interchain with G-Cter in SUMO2) linkage. Over residues 296–305 (EVSAHTSSGK) the composition is skewed to polar residues. Disordered regions lie at residues 296–416 (EVSA…SFSS) and 428–506 (SQPK…SVAS). The span at 306 to 317 (DVSEARGSEGKG) shows a compositional bias: basic and acidic residues. The segment covering 340–351 (TAVSASSPFPQG) has biased composition (polar residues). The segment covering 352–372 (SFSGTPGSVKSSSGSSVQSPQ) has biased composition (low complexity). 3 stretches are compositionally biased toward polar residues: residues 387 to 396 (YTHTQQPSST), 404 to 416 (SGSQ…SFSS), and 428 to 446 (SQPK…SSLP). The residue at position 436 (serine 436) is a Phosphoserine. Positions 465–483 (EKKRKGNKQSKHGPGRPKG) are enriched in basic residues. The span at 490 to 506 (VSHLSVSSASPTSSVAS) shows a compositional bias: low complexity. Position 532 is a phosphoserine (serine 532). Residues 583-594 (SGSGSSTPVSSS) show a composition bias toward low complexity. 2 disordered regions span residues 583–613 (SGSG…LSPS) and 660–698 (SESS…NLQL). Residues 595–604 (HIPQQSSGHL) are compositionally biased toward polar residues. Low complexity predominate over residues 681 to 692 (SSPRGSLSPRSP). A phosphoserine mark is found at serine 686, serine 688, and serine 691. The segment at 752–780 (LQVENRRLEEQIKNLTAKKERLQLLNAQL) is leucine-zipper. Disordered stretches follow at residues 786 to 869 (AITT…VSGV) and 1040 to 1068 (PFLT…QEKS). The segment covering 787 to 816 (ITTNPSPSHQMHTYTAQTAPPPDSLNSSKS) has biased composition (polar residues). 2 stretches are compositionally biased toward low complexity: residues 836–850 (LTSS…SALS) and 857–869 (QSPA…VSGV). Over residues 1040–1054 (PFLTIHGDSTSQKVT) the composition is skewed to polar residues.

As to quaternary structure, self-associates. Interacts with FSTL3; the interaction enhances MLLT10 in vitro transcriptional activity and self-association. Interacts with YEATS4. Interacts with SS18. Interacts with DOT1L. Interacts with histone H3; interaction is necessary for MLLT10 binding to nucleosomes; interaction is inhibited by histone H3 'Lys-27' methylations (H3K27me1, H3K27me2 and H3K27me3) amd acetylation; interaction stabilizes association of MLLT10 at chromatin; interaction is essential for histone H3 'Lys-79' dimethylation (H3K79me2).

The protein resides in the nucleus. Its function is as follows. Probably involved in transcriptional regulation. Binds to cruciform DNA. In cells, binding to unmodified histone H3 regulates DOT1L functions including histone H3 'Lys-79' dimethylation (H3K79me2) and gene activation. This Mus musculus (Mouse) protein is Protein AF-10.